A 105-amino-acid chain; its full sequence is Replication restart protein PriB (105 aa).

The SSB domain maps to 1 to 102 (MTANRLTLSG…LHAEQIELID (102 aa)).

The protein belongs to the PriB family. Homodimer. Interacts with PriA and DnaT. Component of the replication restart primosome. Primosome assembly occurs via a 'hand-off' mechanism. PriA binds to replication forks, subsequently PriB then DnaT bind; DnaT then displaces ssDNA to generate the helicase loading substrate.

In terms of biological role, involved in the restart of stalled replication forks, which reloads the replicative helicase on sites other than the origin of replication; the PriA-PriB pathway is the major replication restart pathway. During primosome assembly it facilitates complex formation between PriA and DnaT on DNA; stabilizes PriA on DNA. Stimulates the DNA unwinding activity of PriA helicase. The protein is Replication restart protein PriB of Serratia proteamaculans (strain 568).